The primary structure comprises 154 residues: Interleukin-2 (154 aa).

The signal sequence occupies residues 1-20 (MYKMQLLCCIALTLALMANG). Thr-23 is a glycosylation site (O-linked (GalNAc...) threonine). A disulfide bridge connects residues Cys-78 and Cys-126.

The protein belongs to the IL-2 family.

It localises to the secreted. In terms of biological role, cytokine produced by activated CD4-positive helper T-cells and to a lesser extend activated CD8-positive T-cells and natural killer (NK) cells that plays pivotal roles in the immune response and tolerance. Binds to a receptor complex composed of either the high-affinity trimeric IL-2R (IL2RA/CD25, IL2RB/CD122 and IL2RG/CD132) or the low-affinity dimeric IL-2R (IL2RB and IL2RG). Interaction with the receptor leads to oligomerization and conformation changes in the IL-2R subunits resulting in downstream signaling starting with phosphorylation of JAK1 and JAK3. In turn, JAK1 and JAK3 phosphorylate the receptor to form a docking site leading to the phosphorylation of several substrates including STAT5. This process leads to activation of several pathways including STAT, phosphoinositide-3-kinase/PI3K and mitogen-activated protein kinase/MAPK pathways. Functions as a T-cell growth factor and can increase NK-cell cytolytic activity as well. Promotes strong proliferation of activated B-cells and subsequently immunoglobulin production. Plays a pivotal role in regulating the adaptive immune system by controlling the survival and proliferation of regulatory T-cells, which are required for the maintenance of immune tolerance. Moreover, participates in the differentiation and homeostasis of effector T-cell subsets, including Th1, Th2, Th17 as well as memory CD8-positive T-cells. This Sus scrofa (Pig) protein is Interleukin-2 (IL2).